The primary structure comprises 406 residues: Transposase for insertion sequence element IS1001 (406 aa).

Belongs to the transposase 12 family.

Involved in the transposition of the insertion sequence. The protein is Transposase for insertion sequence element IS1001 (tnpA) of Bordetella parapertussis.